Consider the following 160-residue polypeptide: UPF0262 protein Mrad2831_3513 (160 aa).

It belongs to the UPF0262 family.

The polypeptide is UPF0262 protein Mrad2831_3513 (Methylobacterium radiotolerans (strain ATCC 27329 / DSM 1819 / JCM 2831 / NBRC 15690 / NCIMB 10815 / 0-1)).